Reading from the N-terminus, the 625-residue chain is E3 ubiquitin-protein ligase synoviolin (625 aa).

Topologically, residues 1-4 are cytoplasmic; sequence MVRA. A helical membrane pass occupies residues 5-25; it reads ALVTATSLALTGAVVAHAYFL. The Lumenal portion of the chain corresponds to 26 to 40; that stretch reads KHQFYPTVVYLTKSS. A helical membrane pass occupies residues 41–61; the sequence is PSMAVLYIQAFVLVFLLGKLM. Topologically, residues 62 to 98 are cytoplasmic; that stretch reads RKVFFGQLRAAEMEHLIERSWYAVTETCLAFTVFRDD. A helical transmembrane segment spans residues 99 to 119; the sequence is FSPRFVALFTLLLFLKCFHWL. Residues 120–135 lie on the Lumenal side of the membrane; sequence AEDRVDFMERSPNISW. A helical membrane pass occupies residues 136–156; that stretch reads VFHFRVLSLMVLLGVMDFLFV. Over 157–169 the chain is Cytoplasmic; that stretch reads NHACHSIITRGAS. Residues 170-190 traverse the membrane as a helical segment; sequence VQLVFGFEYAILMTMVLTTFI. Residues 191-212 lie on the Lumenal side of the membrane; sequence KYTLHTIDLQSENPWDNKAVYM. A helical membrane pass occupies residues 213 to 235; sequence LYTELFTGFIKVLLYMAFMTIMI. Positions 236 to 270 are interaction with p53/TP53; the sequence is KVHTFPLFAIRPMYLAMRQFKKAVTDAIMSRRAIR. Over 236-625 the chain is Cytoplasmic; sequence KVHTFPLFAI…GNLLKLASVN (390 aa). Cys291, Cys294, Cys307, His309, His312, Cys315, Cys326, and Cys329 together coordinate Zn(2+). The RING-type; atypical zinc-finger motif lies at 291 to 330; that stretch reads CIICREEMVTGAKKLPCNHIFHSSCLRSWFQRQQTCPTCR. Disordered stretches follow at residues 337-361, 390-434, 462-487, and 523-625; these read SQPN…NAPI, PPPA…SAAP, FMSS…LEQE, and LSPP…ASVN. A compositionally biased stretch (pro residues) spans 342–361; the sequence is TPAPPAAQAPAPPAPANAPI. Positions 423 to 434 are enriched in low complexity; it reads AQSTAEAASAAP. The span at 462 to 471 shows a compositional bias: pro residues; sequence FMSSMPPPPS. The segment covering 523–564 has biased composition (polar residues); it reads LSPPRSETNTGETSESANVESSPSTANTETAGQEIQSQSGES.

This sequence belongs to the HRD1 family. Homodimer.

Its subcellular location is the endoplasmic reticulum membrane. It catalyses the reaction S-ubiquitinyl-[E2 ubiquitin-conjugating enzyme]-L-cysteine + [acceptor protein]-L-lysine = [E2 ubiquitin-conjugating enzyme]-L-cysteine + N(6)-ubiquitinyl-[acceptor protein]-L-lysine.. The protein operates within protein modification; protein ubiquitination. In terms of biological role, E3 ubiquitin-protein ligase which accepts ubiquitin specifically from endoplasmic reticulum-associated UBC7 E2 ligase and transfers it to substrates, promoting their degradation. Component of the endoplasmic reticulum quality control (ERQC) system also called ER-associated degradation (ERAD) involved in ubiquitin-dependent degradation of misfolded endoplasmic reticulum proteins. Also promotes the degradation of normal but naturally short-lived proteins. Protects cells from ER stress-induced apoptosis. Sequesters p53 in the cytoplasm and promotes its degradation, thereby negatively regulating its biological function in transcription, cell cycle regulation and apoptosis. The protein is E3 ubiquitin-protein ligase synoviolin (syvn1) of Danio rerio (Zebrafish).